The sequence spans 411 residues: Glucose-1-phosphate adenylyltransferase (411 aa).

Alpha-D-glucose 1-phosphate contacts are provided by residues glycine 161, glutamate 176–lysine 177, and serine 195.

This sequence belongs to the bacterial/plant glucose-1-phosphate adenylyltransferase family. As to quaternary structure, homotetramer.

The enzyme catalyses alpha-D-glucose 1-phosphate + ATP + H(+) = ADP-alpha-D-glucose + diphosphate. Its pathway is glycan biosynthesis; glycogen biosynthesis. Functionally, involved in the biosynthesis of ADP-glucose, a building block required for the elongation reactions to produce glycogen. Catalyzes the reaction between ATP and alpha-D-glucose 1-phosphate (G1P) to produce pyrophosphate and ADP-Glc. This chain is Glucose-1-phosphate adenylyltransferase, found in Anaeromyxobacter sp. (strain Fw109-5).